A 1613-amino-acid chain; its full sequence is NAD-specific glutamate dehydrogenase (1613 aa).

Residue K849 is part of the active site.

The protein belongs to the Glu/Leu/Phe/Val dehydrogenases family.

The enzyme catalyses L-glutamate + NAD(+) + H2O = 2-oxoglutarate + NH4(+) + NADH + H(+). Involved in arginine catabolism by converting L-glutamate, into 2-oxoglutarate, which is then channeled into the tricarboxylic acid cycle. The sequence is that of NAD-specific glutamate dehydrogenase from Halomonas elongata (strain ATCC 33173 / DSM 2581 / NBRC 15536 / NCIMB 2198 / 1H9).